The following is a 377-amino-acid chain: Chaperone protein DnaJ (377 aa).

The J domain occupies 5–70 (DYYEVLGVAK…QKRAAYDRYG (66 aa)). The segment at 137–215 (GFDTEIRVPS…CDGVGRTRRN (79 aa)) adopts a CR-type zinc-finger fold. Zn(2+)-binding residues include C150, C153, C167, C170, C189, C192, C203, and C206. 4 CXXCXGXG motif repeats span residues 150 to 157 (CDTCHGSG), 167 to 174 (CRTCGGSG), 189 to 196 (CPTCHGTG), and 203 to 210 (CPSCDGVG).

Belongs to the DnaJ family. Homodimer. Zn(2+) is required as a cofactor.

The protein resides in the cytoplasm. Functionally, participates actively in the response to hyperosmotic and heat shock by preventing the aggregation of stress-denatured proteins and by disaggregating proteins, also in an autonomous, DnaK-independent fashion. Unfolded proteins bind initially to DnaJ; upon interaction with the DnaJ-bound protein, DnaK hydrolyzes its bound ATP, resulting in the formation of a stable complex. GrpE releases ADP from DnaK; ATP binding to DnaK triggers the release of the substrate protein, thus completing the reaction cycle. Several rounds of ATP-dependent interactions between DnaJ, DnaK and GrpE are required for fully efficient folding. Also involved, together with DnaK and GrpE, in the DNA replication of plasmids through activation of initiation proteins. This Bordetella parapertussis (strain 12822 / ATCC BAA-587 / NCTC 13253) protein is Chaperone protein DnaJ.